The sequence spans 218 residues: Large ribosomal subunit protein bL25 (218 aa).

It belongs to the bacterial ribosomal protein bL25 family. CTC subfamily. In terms of assembly, part of the 50S ribosomal subunit; part of the 5S rRNA/L5/L18/L25 subcomplex. Contacts the 5S rRNA. Binds to the 5S rRNA independently of L5 and L18.

Its function is as follows. This is one of the proteins that binds to the 5S RNA in the ribosome where it forms part of the central protuberance. In Gluconobacter oxydans (strain 621H) (Gluconobacter suboxydans), this protein is Large ribosomal subunit protein bL25.